A 541-amino-acid chain; its full sequence is Chaperonin GroEL 2 (541 aa).

ATP-binding positions include 29–32 (TLGP), 86–90 (DGTTT), G413, 476–478 (NAA), and D492.

Belongs to the chaperonin (HSP60) family. In terms of assembly, forms a cylinder of 14 subunits composed of two heptameric rings stacked back-to-back. Interacts with the co-chaperonin GroES.

The protein localises to the secreted. It localises to the capsule. Its subcellular location is the cell surface. It is found in the cell wall. It carries out the reaction ATP + H2O + a folded polypeptide = ADP + phosphate + an unfolded polypeptide.. Together with its co-chaperonin GroES, plays an essential role in assisting protein folding. The GroEL-GroES system forms a nano-cage that allows encapsulation of the non-native substrate proteins and provides a physical environment optimized to promote and accelerate protein folding. The polypeptide is Chaperonin GroEL 2 (Mycolicibacterium paratuberculosis (strain ATCC BAA-968 / K-10) (Mycobacterium paratuberculosis)).